The primary structure comprises 273 residues: Putative peptidyl-prolyl cis-trans isomerase Cbf2 (273 aa).

The N-terminal stretch at 1–21 is a signal peptide; that stretch reads MKKFSLVAAALIAGVALNVNA. The 98-residue stretch at 131–228 folds into the PpiC domain; that stretch reads PARVQAKHIL…FGYHVILKEN (98 aa).

It catalyses the reaction [protein]-peptidylproline (omega=180) = [protein]-peptidylproline (omega=0). The chain is Putative peptidyl-prolyl cis-trans isomerase Cbf2 (cbf2) from Campylobacter jejuni subsp. jejuni serotype O:23/36 (strain 81-176).